The primary structure comprises 200 residues: NAD(P)H dehydrogenase (quinone) (200 aa).

Residues 4–191 form the Flavodoxin-like domain; sequence VLVLYYSSYG…DIARYQGKRV (188 aa). FMN is bound by residues 10 to 15 and 79 to 81; these read SSYGHV and TRF. Tyrosine 12 provides a ligand contact to NAD(+). Residue tryptophan 99 participates in substrate binding. FMN contacts are provided by residues 114-120 and histidine 135; that span reads STGTQHG.

It belongs to the WrbA family. FMN is required as a cofactor.

The catalysed reaction is a quinone + NADH + H(+) = a quinol + NAD(+). It carries out the reaction a quinone + NADPH + H(+) = a quinol + NADP(+). The sequence is that of NAD(P)H dehydrogenase (quinone) from Burkholderia lata (strain ATCC 17760 / DSM 23089 / LMG 22485 / NCIMB 9086 / R18194 / 383).